The sequence spans 151 residues: MKQIIRLITTLLLLSLIGITCAAVAKLHETDKKFKGVELPEKFLDDFNLEVGKLQYANLFRSKKDDITHSAGEIRIDQQGSFSRGEKKKKFKVYNLQAQTNGKSSKTVAHVEVFDTIDAKTKAEQNEVLALAKEAFTKSKDSGKLYQVIPN.

The first 22 residues, Met-1–Ala-22, serve as a signal peptide directing secretion.

It localises to the endoplasmic reticulum. The protein localises to the vacuole. Its function is as follows. Has an essential role in the initiation of differentiation. Also required for cAMP signaling. The chain is Differentiation-associated protein 2 (dia2) from Dictyostelium discoideum (Social amoeba).